The following is a 189-amino-acid chain: Protein GrpE (189 aa).

The tract at residues 1–31 (MSKKHMKGNGGEVPENSEMSGSEELVAVEPG) is disordered.

It belongs to the GrpE family. As to quaternary structure, homodimer.

The protein localises to the cytoplasm. In terms of biological role, participates actively in the response to hyperosmotic and heat shock by preventing the aggregation of stress-denatured proteins, in association with DnaK and GrpE. It is the nucleotide exchange factor for DnaK and may function as a thermosensor. Unfolded proteins bind initially to DnaJ; upon interaction with the DnaJ-bound protein, DnaK hydrolyzes its bound ATP, resulting in the formation of a stable complex. GrpE releases ADP from DnaK; ATP binding to DnaK triggers the release of the substrate protein, thus completing the reaction cycle. Several rounds of ATP-dependent interactions between DnaJ, DnaK and GrpE are required for fully efficient folding. In Syntrophobacter fumaroxidans (strain DSM 10017 / MPOB), this protein is Protein GrpE.